The chain runs to 284 residues: Tropomyosin Per a 7.0103 (284 aa).

The stretch at 1 to 266 (MDAIKKKMQA…EDELVHEKEK (266 aa)) forms a coiled coil.

The protein belongs to the tropomyosin family. As to quaternary structure, homodimer.

In terms of biological role, tropomyosin, in association with the troponin complex, plays a central role in the calcium dependent regulation of muscle contraction. The sequence is that of Tropomyosin Per a 7.0103 from Periplaneta americana (American cockroach).